The sequence spans 108 residues: MMKGQLAGLMKQAQQMQENMKKMQEQLAQIEVEGQSGAGLVKVTMTCKNDVRRVSIDPSLLADDKDMLEDLVAAAFNDAVRKAEATAQEKMGGMTSGLPLPPGFKLPF.

The tract at residues 87 to 108 is disordered; the sequence is AQEKMGGMTSGLPLPPGFKLPF. Residues 99 to 108 show a composition bias toward pro residues; that stretch reads PLPPGFKLPF.

The protein belongs to the YbaB/EbfC family. In terms of assembly, homodimer.

Its subcellular location is the cytoplasm. The protein resides in the nucleoid. Its function is as follows. Binds to DNA and alters its conformation. May be involved in regulation of gene expression, nucleoid organization and DNA protection. The chain is Nucleoid-associated protein Bphy_0952 from Paraburkholderia phymatum (strain DSM 17167 / CIP 108236 / LMG 21445 / STM815) (Burkholderia phymatum).